Consider the following 130-residue polypeptide: Protein ApaG (130 aa).

Residues 3-127 (STITRDIQIT…FSLDSPFSRQ (125 aa)) form the ApaG domain.

In Beijerinckia indica subsp. indica (strain ATCC 9039 / DSM 1715 / NCIMB 8712), this protein is Protein ApaG.